Consider the following 189-residue polypeptide: Recombination protein RecR (189 aa).

The C4-type zinc finger occupies 48–63 (CQTCFHLSAEPTCEIC). The Toprim domain maps to 71–165 (GMLCVVADSR…EVSRIAYGLP (95 aa)).

It belongs to the RecR family.

In terms of biological role, may play a role in DNA repair. It seems to be involved in an RecBC-independent recombinational process of DNA repair. It may act with RecF and RecO. In Synechococcus sp. (strain CC9311), this protein is Recombination protein RecR.